The following is a 317-amino-acid chain: DNA-directed RNA polymerase subunit alpha (317 aa).

The segment at 1 to 229 (MLNEFIYPDK…KHYELLENIF (229 aa)) is alpha N-terminal domain (alpha-NTD). The segment at 245–317 (AEKLSLSIEE…ELGMNIETQR (73 aa)) is alpha C-terminal domain (alpha-CTD).

Belongs to the RNA polymerase alpha chain family. In terms of assembly, homodimer. The RNAP catalytic core consists of 2 alpha, 1 beta, 1 beta' and 1 omega subunit. When a sigma factor is associated with the core the holoenzyme is formed, which can initiate transcription.

It catalyses the reaction RNA(n) + a ribonucleoside 5'-triphosphate = RNA(n+1) + diphosphate. Its function is as follows. DNA-dependent RNA polymerase catalyzes the transcription of DNA into RNA using the four ribonucleoside triphosphates as substrates. This is DNA-directed RNA polymerase subunit alpha from Aquifex aeolicus (strain VF5).